The following is a 207-amino-acid chain: Small ribosomal subunit protein uS4 (207 aa).

Positions 31–55 (KCKLDSKPGQHGRTSGARTSDYGTQ) are disordered. The segment covering 42-53 (GRTSGARTSDYG) has biased composition (polar residues). Residues 97-160 (SRLDNVVYRM…KKQARILEAL (64 aa)) form the S4 RNA-binding domain.

Belongs to the universal ribosomal protein uS4 family. Part of the 30S ribosomal subunit. Contacts protein S5. The interaction surface between S4 and S5 is involved in control of translational fidelity.

Its function is as follows. One of the primary rRNA binding proteins, it binds directly to 16S rRNA where it nucleates assembly of the body of the 30S subunit. Functionally, with S5 and S12 plays an important role in translational accuracy. This chain is Small ribosomal subunit protein uS4, found in Paraburkholderia phymatum (strain DSM 17167 / CIP 108236 / LMG 21445 / STM815) (Burkholderia phymatum).